A 160-amino-acid polypeptide reads, in one-letter code: Type IV major fimbrial protein FimA (160 aa).

Positions 1 to 7 are cleaved as a propeptide — leader sequence; it reads MKSLQKG. An N-methylphenylalanine modification is found at F8. The helical transmembrane segment at 8–28 threads the bilayer; the sequence is FTLIELMIVVAIIGILAAFAI. A disulfide bridge links C63 with C106.

It belongs to the N-Me-Phe pilin family. The pili are polar flexible filaments of about 5.4 nanometers diameter and 2.5 micrometers average length; they consist of only a single polypeptide chain arranged in a helical configuration of five subunits per turn in the assembled pilus.

It localises to the fimbrium. The protein resides in the membrane. Its function is as follows. Major component of the type IV fimbriae that plays an essential role in twitching motility, natural transformation, and protease secretion. This is Type IV major fimbrial protein FimA (fimA) from Dichelobacter nodosus (Bacteroides nodosus).